The sequence spans 133 residues: Type III secretion protein HrcQb (133 aa).

Over residues 1 to 21 (MSTEDLYQDDVEMLDDYEEPV) the composition is skewed to acidic residues. A disordered region spans residues 1 to 60 (MSTEDLYQDDVEMLDDYEEPVPEQADQQQRDDEYAEHAFGYADSDAEHEEQSGDHHESPM). Positions 49–59 (EEQSGDHHESP) are enriched in basic and acidic residues.

It belongs to the FliN/MopA/SpaO family. In terms of assembly, homotetramer. The four monomers assemble into two tightly bound homodimers. Interacts with HrcQa.

The protein localises to the cytoplasm. In terms of biological role, component of the type III secretion system, which is required for effector protein delivery, parasitism, and pathogenicity. Probably participates in the formation of a C-ring-like assembly along with HrcQa. The sequence is that of Type III secretion protein HrcQb (hrcQb) from Pseudomonas syringae pv. syringae.